A 131-amino-acid polypeptide reads, in one-letter code: MVNDIIADSLTRLRNASMRRLEFTQLYYAKIVVSILEIFKEKGFIKDFNVKDKDKKQSVYVQLAYDEKGHSKISEVKRLSKPGRRVYKQKNELKRFKNGYGVIVVSTSKGVITNEEAYRQNVGGEVLCSIW.

The protein belongs to the universal ribosomal protein uS8 family. Part of the 30S ribosomal subunit. Contacts proteins S5 and S12.

One of the primary rRNA binding proteins, it binds directly to 16S rRNA central domain where it helps coordinate assembly of the platform of the 30S subunit. In Helicobacter pylori (strain P12), this protein is Small ribosomal subunit protein uS8.